The following is an 82-amino-acid chain: Conotoxin Gla-TxX (82 aa).

Residues 1-25 form the signal peptide; the sequence is MSGHTSVSFLLLSIVALGMVATVIC. Glu30, Glu34, Glu37, Glu40, and Glu41 each carry 4-carboxyglutamate. Residue Asn72 is modified to Asparagine amide. Positions 77–82 are excised as a propeptide; the sequence is LIHMQK.

In terms of processing, contains 4 disulfide bonds. In terms of tissue distribution, expressed by the venom duct.

The protein localises to the secreted. This is Conotoxin Gla-TxX from Conus textile (Cloth-of-gold cone).